A 324-amino-acid polypeptide reads, in one-letter code: HTH-type transcriptional regulator GlxA (324 aa).

The HTH araC/xylS-type domain maps to 223 to 321 (LAVLEKMETA…SQTPGSLRRR (99 aa)). 2 consecutive DNA-binding regions (H-T-H motif) follow at residues 240–261 (TAMARLAGVSPRHLDRLFREHR) and 288–311 (IPEIAYATGFSSPAHFSNAFKRLF).

This chain is HTH-type transcriptional regulator GlxA (glxA), found in Rhizobium meliloti (strain 1021) (Ensifer meliloti).